Consider the following 217-residue polypeptide: N-(5'-phosphoribosyl)anthranilate isomerase (217 aa).

Belongs to the TrpF family.

The catalysed reaction is N-(5-phospho-beta-D-ribosyl)anthranilate = 1-(2-carboxyphenylamino)-1-deoxy-D-ribulose 5-phosphate. Its pathway is amino-acid biosynthesis; L-tryptophan biosynthesis; L-tryptophan from chorismate: step 3/5. The chain is N-(5'-phosphoribosyl)anthranilate isomerase from Acaryochloris marina (strain MBIC 11017).